A 279-amino-acid chain; its full sequence is Acetylglutamate kinase (279 aa).

Substrate is bound by residues 62 to 63, arginine 84, and asparagine 177; that span reads GG.

Belongs to the acetylglutamate kinase family. ArgB subfamily.

Its subcellular location is the cytoplasm. It carries out the reaction N-acetyl-L-glutamate + ATP = N-acetyl-L-glutamyl 5-phosphate + ADP. The protein operates within amino-acid biosynthesis; L-arginine biosynthesis; N(2)-acetyl-L-ornithine from L-glutamate: step 2/4. Its function is as follows. Catalyzes the ATP-dependent phosphorylation of N-acetyl-L-glutamate. The protein is Acetylglutamate kinase of Pseudothermotoga lettingae (strain ATCC BAA-301 / DSM 14385 / NBRC 107922 / TMO) (Thermotoga lettingae).